The sequence spans 239 residues: 2,3,4,5-tetrahydropyridine-2,6-dicarboxylate N-acetyltransferase (239 aa).

Belongs to the transferase hexapeptide repeat family. DapH subfamily.

It carries out the reaction (S)-2,3,4,5-tetrahydrodipicolinate + acetyl-CoA + H2O = L-2-acetamido-6-oxoheptanedioate + CoA. It functions in the pathway amino-acid biosynthesis; L-lysine biosynthesis via DAP pathway; LL-2,6-diaminopimelate from (S)-tetrahydrodipicolinate (acetylase route): step 1/3. Its function is as follows. Catalyzes the transfer of an acetyl group from acetyl-CoA to tetrahydrodipicolinate. This Staphylococcus haemolyticus (strain JCSC1435) protein is 2,3,4,5-tetrahydropyridine-2,6-dicarboxylate N-acetyltransferase.